A 91-amino-acid chain; its full sequence is MKKQESIHTQLPGENVNTGFTASQIYYSTYQVSKLTSHLELHPRDYSSQIGLWKLLGRRKRLLAYLFKKNTGLYERVLTKLGIRGLKVKGR.

It belongs to the universal ribosomal protein uS15 family. In terms of assembly, part of the 30S ribosomal subunit.

The protein localises to the plastid. It is found in the chloroplast. The polypeptide is Small ribosomal subunit protein uS15c (rps15) (Adiantum capillus-veneris (Maidenhair fern)).